The following is a 209-amino-acid chain: Ribosomal RNA large subunit methyltransferase E (209 aa).

Residues G63, W65, D83, D99, and D124 each coordinate S-adenosyl-L-methionine. The active-site Proton acceptor is K164.

The protein belongs to the class I-like SAM-binding methyltransferase superfamily. RNA methyltransferase RlmE family.

Its subcellular location is the cytoplasm. It carries out the reaction uridine(2552) in 23S rRNA + S-adenosyl-L-methionine = 2'-O-methyluridine(2552) in 23S rRNA + S-adenosyl-L-homocysteine + H(+). Its function is as follows. Specifically methylates the uridine in position 2552 of 23S rRNA at the 2'-O position of the ribose in the fully assembled 50S ribosomal subunit. This Aeromonas hydrophila subsp. hydrophila (strain ATCC 7966 / DSM 30187 / BCRC 13018 / CCUG 14551 / JCM 1027 / KCTC 2358 / NCIMB 9240 / NCTC 8049) protein is Ribosomal RNA large subunit methyltransferase E.